Here is an 82-residue protein sequence, read N- to C-terminus: Consomatin Ar1 (82 aa).

The first 22 residues, 1–22 (MQTAYWVVVMMMMVWVTAPVSE), serve as a signal peptide directing secretion. Residues 23–60 (GGKLSDVIWGLVPDDLTPQIILQILNASRHAYRRVRPR) constitute a propeptide that is removed on maturation. Cysteines 64 and 69 form a disulfide. D-tryptophan is present on Trp66. Residues Pro70, Pro71, and Pro73 each carry the 4-hydroxyproline modification. Positions 74-82 (QWIHPLVKR) are excised as a propeptide.

Belongs to the conotoxin C superfamily. Consomatin family. As to expression, expressed by the venom duct.

The protein localises to the secreted. Functionally, moderately activates human somatostatin receptors (SSTR) with a preferential activation of SSTR1 and SSTR4. In vivo, does not cause behavioral changes in mice within a few minutes of intracranial injection, but causes a progressive loss of movement thereafter. Four to five hours after injection, mice recover, even with the highest dose tested. Shows antinociception and antihyperalgesia activities in two mouse models of acute pain, most probably by acting outside the central nervous system. This Conus arenatus (Sand-dusted cone) protein is Consomatin Ar1.